A 430-amino-acid chain; its full sequence is 3-phosphoshikimate 1-carboxyvinyltransferase (430 aa).

3-phosphoshikimate contacts are provided by K21, S22, and R26. Phosphoenolpyruvate is bound at residue K21. Phosphoenolpyruvate contacts are provided by G94 and R122. Positions 167, 169, 317, and 344 each coordinate 3-phosphoshikimate. Residue Q169 coordinates phosphoenolpyruvate. D317 functions as the Proton acceptor in the catalytic mechanism. Phosphoenolpyruvate-binding residues include R348 and R390.

It belongs to the EPSP synthase family. As to quaternary structure, monomer.

Its subcellular location is the cytoplasm. It catalyses the reaction 3-phosphoshikimate + phosphoenolpyruvate = 5-O-(1-carboxyvinyl)-3-phosphoshikimate + phosphate. It participates in metabolic intermediate biosynthesis; chorismate biosynthesis; chorismate from D-erythrose 4-phosphate and phosphoenolpyruvate: step 6/7. In terms of biological role, catalyzes the transfer of the enolpyruvyl moiety of phosphoenolpyruvate (PEP) to the 5-hydroxyl of shikimate-3-phosphate (S3P) to produce enolpyruvyl shikimate-3-phosphate and inorganic phosphate. The chain is 3-phosphoshikimate 1-carboxyvinyltransferase from Thermodesulfovibrio yellowstonii (strain ATCC 51303 / DSM 11347 / YP87).